Here is a 170-residue protein sequence, read N- to C-terminus: Lipoprotein signal peptidase (170 aa).

The next 3 membrane-spanning stretches (helical) occupy residues 12–32, 67–87, and 93–113; these read WYWV…WVLA, WQRW…TVWL, and SLWK…GNLI. Active-site residues include D123 and D141. A helical membrane pass occupies residues 137–157; the sequence is FNIADSAIFIGAVLIIWDSFF.

This sequence belongs to the peptidase A8 family.

The protein resides in the cell inner membrane. The enzyme catalyses Release of signal peptides from bacterial membrane prolipoproteins. Hydrolyzes -Xaa-Yaa-Zaa-|-(S,diacylglyceryl)Cys-, in which Xaa is hydrophobic (preferably Leu), and Yaa (Ala or Ser) and Zaa (Gly or Ala) have small, neutral side chains.. It participates in protein modification; lipoprotein biosynthesis (signal peptide cleavage). This protein specifically catalyzes the removal of signal peptides from prolipoproteins. This is Lipoprotein signal peptidase from Shewanella sp. (strain MR-4).